The chain runs to 992 residues: MAARWSSENVVVEFRDSQATAMSVDCLGQHAVLSGRRFLYIVNLDAPFEGHRKISRQSKWDIGAVQWNPHDSFAHYFAASSNQRVDLYKWKDGSGEVGTTLQGHTRVISDLDWAVFEPDLLVTSSVDTYIYIWDIKDTRKPTVALSAVAGASQVKWNKKNANYLATSHDGDVRIWDKRKPSTAVEYLAAHLSKIHGLDWHPDSEHIFATSSQDNSVKFWDYRQPRKYLNILPCQVPVWKARYTPFSNGLVTVMVPQLRRENSLLLWNASDLNAPVHTFVGHDDVVLEFQWRRQKEGSKDYQLVTWSRDQTLRMWRVDYQMQRLCANDILDGVDEFIESISLLPEPEKTPHPQDIDHQPSLSHGEEDAIKEDPPSSLLEEKRSDQLGLPQTLQQEFSLINVQIRNVNVEMDAADRSCTVSVHCSNHRVKMLVTFPAQYPNNAAPSFQFINPTTITSAVKAKLLKILKDTSLQKVKRNQSCLEPCLRQLVSCLESFVNQEDSASSNPFALQNSVTPPLPTFARVTTAYGSYQDANIPFPRTSGARFCGAGYLVYFTRPMTMHRAVSPTEPTPRSLSALSAYHTGLIAPMKIRTEAPGNLRLYSGSPTRSEKEQVSISSFYYKERKSRRWKSKREGSDSGNRPIKAAGKVIIQDVSCLLPVHKSLGELYILNVNDTQETCQKNATSAMLVGRKDLVQVWSLATVATDLCLGPKSDPDLETPWARHPFGRQLLESLWGDRESTRVCGPPLSGARLAHYCQLRDVQTLAMLCSVFEAQSRPQGLPNPFGPFPNRSSNLVVSHSRYPSFTSSGSCSSMSDPGFNTGGWNIAGRETEHISSPWGESSPEELRFGSLTYSDPRERERDQHDKNKRLLDPANTQQFDDFKKCYGEILYRWGLREKRAEVLKFVSCPPDPHKGIEFGVYCSHCRSEVRGTQCAICKGFTFQCAICHVAVRGSSNFCLTCGHGGHTSHMMEWFRTQEVCPTGCGCHCLLESTF.

WD repeat units lie at residues 57–98 (QSKW…GEVG), 103–143 (GHTR…KPTV), 146–185 (SAVA…TAVE), 189–229 (AHLS…KYLN), 232–276 (PCQV…APVH), 278–318 (FVGH…RVDY), and 319–362 (QMQR…SLSH). Positions 343–373 (PEPEKTPHPQDIDHQPSLSHGEEDAIKEDPP) are disordered. Basic and acidic residues predominate over residues 344–373 (EPEKTPHPQDIDHQPSLSHGEEDAIKEDPP). An RWD domain is found at 393-494 (QEFSLINVQI…RQLVSCLESF (102 aa)). Ser-564 is modified (phosphoserine). The stretch at 660–706 (KSLGELYILNVNDTQETCQKNATSAMLVGRKDLVQVWSLATVATDLC) is one WD 8 repeat. 3 positions are modified to phosphoserine: Ser-839, Ser-840, and Ser-848. Residues 849–870 (LTYSDPRERERDQHDKNKRLLD) form a disordered region. The segment covering 853 to 869 (DPRERERDQHDKNKRLL) has biased composition (basic and acidic residues). Residues 919-939 (YCSHCRSEVRGTQCAICKGFT) form a C4-type zinc finger. Zn(2+)-binding residues include Cys-920, Cys-923, Cys-932, Cys-935, Cys-945, Cys-956, His-961, His-964, His-967, Cys-978, Cys-982, Cys-984, and Cys-986. The segment at 940 to 989 (FQCAICHVAVRGSSNFCLTCGHGGHTSHMMEWFRTQEVCPTGCGCHCLLE) adopts an RING-type; atypical zinc-finger fold.

It belongs to the WD repeat WDR59 family. In terms of assembly, component of the GATOR2 subcomplex, composed of MIOS, SEC13, SEH1L, WDR24 and WDR59. The GATOR2 complex interacts with CASTOR1 and CASTOR2; the interaction is negatively regulated by arginine. The GATOR2 complex interacts with SESN1, SESN2 and SESN3; the interaction is negatively regulated by amino acids. Interacts with DDB1-CUL4A/B E3 ligase complexes.

Its subcellular location is the lysosome membrane. With respect to regulation, the GATOR2 complex is negatively regulated by the upstream amino acid sensors CASTOR1 and SESN2, which sequester the GATOR2 complex in absence of amino acids. In the presence of abundant amino acids, GATOR2 is released from CASTOR1 and SESN2 and activated. Functionally, as a component of the GATOR2 complex, functions as an activator of the amino acid-sensing branch of the mTORC1 signaling pathway. The GATOR2 complex indirectly activates mTORC1 through the inhibition of the GATOR1 subcomplex. GATOR2 probably acts as an E3 ubiquitin-protein ligase toward GATOR1. In the presence of abundant amino acids, the GATOR2 complex mediates ubiquitination of the NPRL2 core component of the GATOR1 complex, leading to GATOR1 inactivation. In the absence of amino acids, GATOR2 is inhibited, activating the GATOR1 complex. The polypeptide is GATOR2 complex protein WDR59 (Mus musculus (Mouse)).